Reading from the N-terminus, the 530-residue chain is Glucocorticoid modulatory element-binding protein 2 (530 aa).

One can recognise an SAND domain in the interval 81–163; the sequence is EEGENLEAEI…RKIMDSGELD (83 aa). Position 110 (C110) interacts with Zn(2+). 4 residues coordinate DNA: K136, K140, K143, and R154. K155 participates in a covalent cross-link: Glycyl lysine isopeptide (Lys-Gly) (interchain with G-Cter in SUMO1); alternate. K155 participates in a covalent cross-link: Glycyl lysine isopeptide (Lys-Gly) (interchain with G-Cter in SUMO2); alternate. Residues H167, C171, and C175 each contribute to the Zn(2+) site. Positions 304–348 form a coiled coil; sequence QMDRSREQYARDLAALEQQCDEHRRRAKELKHKSQHLSNVLMTLT. Phosphoserine is present on S373.

As to quaternary structure, homodimer, and heterodimer of GMEB1 and GMEB2. GMEB1 and GMEB2 form the parvovirus initiator complex (PIF). Interacts with the glucocorticoid receptor (NR3C1). May interact with CREB-binding protein (CBP). In terms of tissue distribution, expressed in peripheral blood lymphocytes and fetal liver. Expressed preferentially in reproductive and/or developmentally important cells, such as testis, placenta, bone marrow and fetal tissues.

Its subcellular location is the nucleus. The protein localises to the cytoplasm. Its function is as follows. Trans-acting factor that binds to glucocorticoid modulatory elements (GME) present in the TAT (tyrosine aminotransferase) promoter and increases sensitivity to low concentrations of glucocorticoids. Also binds to the transferrin receptor promoter. Essential auxiliary factor for the replication of parvoviruses. The chain is Glucocorticoid modulatory element-binding protein 2 (GMEB2) from Homo sapiens (Human).